A 416-amino-acid polypeptide reads, in one-letter code: Gamma-glutamyl phosphate reductase (416 aa).

Belongs to the gamma-glutamyl phosphate reductase family.

It localises to the cytoplasm. The catalysed reaction is L-glutamate 5-semialdehyde + phosphate + NADP(+) = L-glutamyl 5-phosphate + NADPH + H(+). It functions in the pathway amino-acid biosynthesis; L-proline biosynthesis; L-glutamate 5-semialdehyde from L-glutamate: step 2/2. Catalyzes the NADPH-dependent reduction of L-glutamate 5-phosphate into L-glutamate 5-semialdehyde and phosphate. The product spontaneously undergoes cyclization to form 1-pyrroline-5-carboxylate. This Petrotoga mobilis (strain DSM 10674 / SJ95) protein is Gamma-glutamyl phosphate reductase.